The following is a 177-amino-acid chain: Large ribosomal subunit protein uL6 (177 aa).

It belongs to the universal ribosomal protein uL6 family. Part of the 50S ribosomal subunit.

Functionally, this protein binds to the 23S rRNA, and is important in its secondary structure. It is located near the subunit interface in the base of the L7/L12 stalk, and near the tRNA binding site of the peptidyltransferase center. This Bartonella bacilliformis (strain ATCC 35685 / KC583 / Herrer 020/F12,63) protein is Large ribosomal subunit protein uL6.